A 466-amino-acid chain; its full sequence is 20-hydroxyecdysone protein (466 aa).

Residues Met1 to Ala16 form the signal peptide. Residues Glu48–Lys50 form a 1; approximate repeat. The segment at Glu48–Lys157 is 16 X repeats. The 2; approximate repeat unit spans residues Glu53–Lys55. Residues Lys55–Glu94 form a disordered region. One copy of the 3; approximate repeat lies at Glu58–Lys60. The 4; approximate repeat unit spans residues Asp70–Lys72. The 5; approximate repeat unit spans residues Glu74–Lys76. The 6; approximate repeat unit spans residues Glu78–Lys80. The 7; approximate repeat unit spans residues Glu82–Lys84. The stretch at Asp90–Lys92 is one 8; approximate repeat. Residues Glu94–Lys96 form a 9; approximate repeat. A 10; approximate repeat occupies Asp98–Lys100. The 11; approximate repeat unit spans residues Asp102 to Lys104. The stretch at Glu106–Lys108 is one 12; approximate repeat. The tract at residues Pro119 to Val220 is disordered. A compositionally biased stretch (basic and acidic residues) spans Leu124 to Pro160. Residues Glu125–Lys127 form a 13; approximate repeat. A 14; approximate repeat occupies Glu139–Lys141. The stretch at Glu148–Lys150 is one 15; approximate repeat. The stretch at Glu155–Lys157 is one 16; approximate repeat. The segment covering Ala170–Glu180 has biased composition (low complexity). Residues Pro185–Gln194 show a composition bias toward polar residues. The span at Gln203–Gln216 shows a compositional bias: low complexity. Asn294 and Asn352 each carry an N-linked (GlcNAc...) asparagine glycan. Positions Arg378–Val435 are disordered. The span at Pro379–Lys394 shows a compositional bias: low complexity. The segment covering Ala404–Asp416 has biased composition (acidic residues).

Its subcellular location is the secreted. In terms of biological role, probably has an essential role in embryogenesis, induces morphogenesis of imaginal disks, and may participate in multimolecular aggregates. The protein is 20-hydroxyecdysone protein (ImpE2) of Drosophila melanogaster (Fruit fly).